A 246-amino-acid polypeptide reads, in one-letter code: UPF0309 protein TTE0306 (246 aa).

In terms of domain architecture, SIS spans 31 to 212 (ITESLISEDS…EAEIITNMLE (182 aa)).

It belongs to the UPF0309 family.

The protein is UPF0309 protein TTE0306 of Caldanaerobacter subterraneus subsp. tengcongensis (strain DSM 15242 / JCM 11007 / NBRC 100824 / MB4) (Thermoanaerobacter tengcongensis).